The following is a 24-amino-acid chain: Neurotoxin-2 (24 aa).

In terms of domain architecture, LCN-type CS-alpha/beta spans 1–24; the sequence is EDGYLLNRDTGCKVSCGTCRYCND.

It belongs to the long (4 C-C) scorpion toxin superfamily. Sodium channel inhibitor family. Alpha subfamily. Expressed by the venom gland.

The protein resides in the secreted. Binds to sodium channels (Nav) and inhibits the inactivation of the activated channels, thereby blocking neuronal transmission. This toxin is active against mammals. This Hottentotta tamulus (Eastern Indian scorpion) protein is Neurotoxin-2.